The sequence spans 250 residues: Ribosomal RNA small subunit methyltransferase J (250 aa).

S-adenosyl-L-methionine-binding positions include arginine 101 to aspartate 102, glutamate 117 to arginine 118, serine 153 to serine 154, and aspartate 171.

The protein belongs to the methyltransferase superfamily. RsmJ family.

It is found in the cytoplasm. It catalyses the reaction guanosine(1516) in 16S rRNA + S-adenosyl-L-methionine = N(2)-methylguanosine(1516) in 16S rRNA + S-adenosyl-L-homocysteine + H(+). Its function is as follows. Specifically methylates the guanosine in position 1516 of 16S rRNA. The sequence is that of Ribosomal RNA small subunit methyltransferase J from Shigella dysenteriae serotype 1 (strain Sd197).